Reading from the N-terminus, the 55-residue chain is Large ribosomal subunit protein bL33 (55 aa).

The protein belongs to the bacterial ribosomal protein bL33 family.

This is Large ribosomal subunit protein bL33 (rpmG) from Nitrobacter hamburgensis (strain DSM 10229 / NCIMB 13809 / X14).